Consider the following 249-residue polypeptide: Triosephosphate isomerase (249 aa).

Substrate contacts are provided by Asn-12 and Lys-14. Lys-14 carries the N6-acetyllysine modification. A 3'-nitrotyrosine modification is found at Tyr-68. A Phosphoserine modification is found at Ser-80. The active-site Electrophile is the His-96. Ser-106 is modified (phosphoserine). Lys-142 participates in a covalent cross-link: Glycyl lysine isopeptide (Lys-Gly) (interchain with G-Cter in SUMO1). N6-succinyllysine is present on Lys-149. Lys-156 carries the post-translational modification N6-acetyllysine; alternate. Lys-156 bears the N6-succinyllysine; alternate mark. Ser-159 carries the phosphoserine modification. Glu-166 (proton acceptor) is an active-site residue. Position 173 is a phosphothreonine (Thr-173). Lys-194 is modified (N6-acetyllysine; alternate). Lys-194 carries the post-translational modification N6-succinyllysine; alternate. Lys-194 bears the N6-methyllysine; alternate mark. Ser-198 is modified (phosphoserine). A 3'-nitrotyrosine modification is found at Tyr-209. A Phosphoserine modification is found at Ser-212. Thr-214 is modified (phosphothreonine). The residue at position 223 (Ser-223) is a Phosphoserine. At Lys-238 the chain carries N6-acetyllysine.

This sequence belongs to the triosephosphate isomerase family. As to quaternary structure, homodimer.

Its subcellular location is the cytoplasm. It catalyses the reaction dihydroxyacetone phosphate = methylglyoxal + phosphate. The enzyme catalyses D-glyceraldehyde 3-phosphate = dihydroxyacetone phosphate. It participates in carbohydrate degradation; glycolysis; D-glyceraldehyde 3-phosphate from glycerone phosphate: step 1/1. It functions in the pathway carbohydrate biosynthesis; gluconeogenesis. In terms of biological role, triosephosphate isomerase is an extremely efficient metabolic enzyme that catalyzes the interconversion between dihydroxyacetone phosphate (DHAP) and D-glyceraldehyde-3-phosphate (G3P) in glycolysis and gluconeogenesis. It is also responsible for the non-negligible production of methylglyoxal a reactive cytotoxic side-product that modifies and can alter proteins, DNA and lipids. The chain is Triosephosphate isomerase (TPI1) from Bos taurus (Bovine).